The sequence spans 139 residues: Short neuropeptide F (139 aa).

A propeptide spanning residues 1–23 (MGRARRTVRAPAQHDALGGHALA) is cleaved from the precursor. Residues 1–48 (MGRARRTVRAPAQHDALGGHALARKSVRSPSRRLRFGRRSDPDMPPQA) are disordered. Residues 22–37 (LARKSVRSPSRRLRFG) are compositionally biased toward basic residues. At phenylalanine 36 the chain carries Phenylalanine amide. Positions 40-62 (SDPDMPPQAPLDEMNELLSLREV) are excised as a propeptide. A Phenylalanine amide modification is found at phenylalanine 70. A propeptide spanning residues 74–96 (SEERAVPHIFPQEFLTQEQDRAV) is cleaved from the precursor. A Phenylalanine amide modification is found at phenylalanine 105. A propeptide spanning residues 109 to 139 (SDNNMFLLPYESALPQEVKANGSVEDDRQQE) is cleaved from the precursor.

This sequence belongs to the NPY family. SNPF peptide 1: Expressed in corpora cardiaca (CC), corpora allata (CA), antennal lobe (AL) and gnathal ganglion (GNG) (at protein level). Expression in AL detected in all animals, in GNG in most animals, expression in CC and CA in some animals (at protein level). sNPF peptide 2: Expressed in corpora cardiaca (CC), corpora allata (CA), antennal lobe (AL) and gnathal ganglion (GNG) (at protein level). Expression in AL detected in all animals, in GNG, CC and CA in most animals (at protein level). sNPF peptide 3: Expressed in corpora cardiaca (CC), corpora allata (CA), antennal lobe (AL) and gnathal ganglion (GNG) (at protein level). Expression detected in all animals (at protein level).

It localises to the secreted. Functionally, plays a role in controlling food intake and regulating body size. This is Short neuropeptide F from Agrotis ipsilon (Black cutworm moth).